The primary structure comprises 414 residues: Esterase FrsA (414 aa).

It belongs to the FrsA family.

It carries out the reaction a carboxylic ester + H2O = an alcohol + a carboxylate + H(+). Its function is as follows. Catalyzes the hydrolysis of esters. In Salmonella typhi, this protein is Esterase FrsA.